A 615-amino-acid chain; its full sequence is MLRPKAGKCLLCSFRAAQKPVSQKWPSRALSMRTRLPSRPNRMSLAGAGKVSSSPTKEGPARRKQDGPFGGMNLREAKIRGVPERPSAAQERRTSRLDHRDRDDKKDRGFHALKMQSPLAPVSYVRRTDIKGRMNEVQSFEQFALLDSVKQAIFQQALPELKEHVPTPVQRIAVPALLGDQQSRRPKSEMEQYLIAAETGSGKTLSYLIPTINAIKVAEAKDAEVKAYEKELQEEKLRQNNLTLVSPPLSNMPHPTTGRPRAIILVPTSELVTQVGTLLKLFSHTVKFKAAVISSNFSGKVIRNRLFSPSGIDILVSTPHLLSSIADSDPNILSRVTHLIIDEADSLLDRGFSPLTSAIIDRATPSLEKLVLCSATIPRSLDSFLRKRFPDINRLVTPNLHAIPRRVQLGVVDVERDPYRNNKNLACADTIWSIGKAAAEHDGPVKGLMDVKRILVFVNEREKTQEVADYLVSKGVDAIALSRDTPEQRQSEMLASFTSPAKLSVEKPVSHPGSLSDNQPNYVPFGEVAPPVKRRLPNTKVLVTTDLGSRGIDTVAVRHVILYDVPHSTIDFIHRLGRTGRMGRRGRGIVLVGKGDRRDVVKEVREGMFEGKALI.

The N-terminal 37 residues, M1–P37, are a transit peptide targeting the mitochondrion. The tract at residues V21–R108 is disordered. Residues Q90–R108 show a composition bias toward basic and acidic residues. Positions Q138–R171 match the Q motif motif. In terms of domain architecture, Helicase ATP-binding spans R184–L395. ATP is bound at residue A197–T204. A DEAD box motif is present at residues D342–D345. A Helicase C-terminal domain is found at P444 to I615.

It belongs to the DEAD box helicase family. MRH4 subfamily.

The protein localises to the mitochondrion. It carries out the reaction ATP + H2O = ADP + phosphate + H(+). ATP-binding RNA helicase involved in mitochondrial RNA metabolism. Required for maintenance of mitochondrial DNA. The sequence is that of ATP-dependent RNA helicase mrh4, mitochondrial (mrh4) from Sclerotinia sclerotiorum (strain ATCC 18683 / 1980 / Ss-1) (White mold).